Consider the following 608-residue polypeptide: 65-kDa microtubule-associated protein 6 (608 aa).

3 coiled-coil regions span residues Asp-164–Asp-186, Glu-368–Lys-388, and Val-467–Gln-503. Residues Leu-501–Asn-565 are disordered. The segment covering Ser-510–Pro-523 has biased composition (low complexity). Residue Ser-513 is modified to Phosphoserine. Residues Phe-526–Val-535 are compositionally biased toward polar residues. Phosphoserine is present on Ser-604.

It belongs to the MAP65/ASE1 family. In terms of assembly, forms a dimer. Binds to polymerized centrally located endocytic MT.

Its subcellular location is the nucleus. It is found in the cytoplasm. The protein localises to the mitochondrion. The protein resides in the cytoskeleton. It localises to the phragmoplast. In terms of biological role, microtubule-associated protein that mediates the formation of a mesh-like stable and dense network formed by individual microtubules (MT). Confers MT resistance to high concentration of NaCl. This chain is 65-kDa microtubule-associated protein 6 (MAP65-6), found in Arabidopsis thaliana (Mouse-ear cress).